Consider the following 441-residue polypeptide: Ribosomal protein uS12 methylthiotransferase RimO (441 aa).

The MTTase N-terminal domain maps to Pro-8 to Pro-118. Positions 17, 53, 82, 150, 154, and 157 each coordinate [4Fe-4S] cluster. The 238-residue stretch at Leu-136–Glu-373 folds into the Radical SAM core domain. The TRAM domain occupies Gln-376–Val-441.

It belongs to the methylthiotransferase family. RimO subfamily. It depends on [4Fe-4S] cluster as a cofactor.

The protein resides in the cytoplasm. It catalyses the reaction L-aspartate(89)-[ribosomal protein uS12]-hydrogen + (sulfur carrier)-SH + AH2 + 2 S-adenosyl-L-methionine = 3-methylsulfanyl-L-aspartate(89)-[ribosomal protein uS12]-hydrogen + (sulfur carrier)-H + 5'-deoxyadenosine + L-methionine + A + S-adenosyl-L-homocysteine + 2 H(+). Its function is as follows. Catalyzes the methylthiolation of an aspartic acid residue of ribosomal protein uS12. The polypeptide is Ribosomal protein uS12 methylthiotransferase RimO (Escherichia coli (strain SMS-3-5 / SECEC)).